Reading from the N-terminus, the 233-residue chain is MSQSNRELVVDFLSYKLSQKGYSWSQFSDVEENRTEAPEETEAERETPSAINGNPSWHLADSPAVNGATGHSSSLDAREVIPMAAVKQALREAGDEFELRYRRAFSDLTSQLHITPGTAYQSFEQVVNELFRDGVNWGRIVAFFSFGGALCVESVDKEMQVLVSRIASWMATYLNDHLEPWIQENGGWDTFVDLYGNNAAAESRKGQERFNRWFLTGMTVAGVVLLGSLFSRK.

Residues 4 to 24 (SNRELVVDFLSYKLSQKGYSW) carry the BH4 motif. The segment at 27–73 (FSDVEENRTEAPEETEAERETPSAINGNPSWHLADSPAVNGATGHSS) is disordered. A Phosphoserine; by PLK3 modification is found at S49. S62 carries the phosphoserine; by CDK1 modification. The short motif at 86-100 (VKQALREAGDEFELR) is the BH3 element. The short motif at 129–148 (ELFRDGVNWGRIVAFFSFGG) is the BH1 element. The BH2 signature appears at 180–195 (PWIQENGGWDTFVDLY). The chain crosses the membrane as a helical span at residues 210-226 (FNRWFLTGMTVAGVVLL).

Belongs to the Bcl-2 family. As to quaternary structure, homodimer. Interacts with BAD. Interacts with PGAM5. Interacts with HEBP2. Interacts with p53/TP53 and BBC3; interaction with BBC3 disrupts the interaction with p53/TP53. Interacts with ATP5F1A and ATP5F1B; the interactions mediate the association of isoform Bcl-X(L) with the mitochondrial membrane ATP synthase F(1)F(0) ATP synthase. Interacts with VDAC1. Interacts with BCL2L11 (via BH3). Interacts with RNF183. Interacts with GIMAP3/IAN4 and GIMAP5/IAN5. Interacts with GIMAP5 and HSPA8/HSC70; the interaction between HSPA8 and BCL2L1 is impaired in the absence of GIMAP5. Interacts with isoform 4 of CLU; this interaction releases and activates BAX and promotes cell death. Forms heterodimers with BAX, BAK or BCL2; heterodimerization with BAX does not seem to be required for anti-apoptotic activity. Interacts with isoform 1 of SIVA1; the interaction inhibits the anti-apoptotic activity. Interacts with IKZF3. Interacts with RTL10/BOP. Interacts with DNM1L and CLTA; DNM1L and BCL2L1 isoform BCL-X(L) may form a complex in synaptic vesicles that also contains clathrin and MFF. Interacts (via the loop between motifs BH4 and BH3) with NLRP1 (via LRR repeats), but not with NLRP2, NLRP3, NLRP4, PYCARD, nor MEFV. Interacts with BECN1. In terms of processing, proteolytically cleaved by caspases during apoptosis. The cleaved protein, lacking the BH4 motif, has pro-apoptotic activity. Phosphorylated on Ser-62 by CDK1. This phosphorylation is partial in normal mitotic cells, but complete in G2-arrested cells upon DNA-damage, thus promoting subsequent apoptosis probably by triggering caspases-mediated proteolysis. Phosphorylated by PLK3, leading to regulate the G2 checkpoint and progression to cytokinesis during mitosis. Phosphorylation at Ser-49 appears during the S phase and G2, disappears rapidly in early mitosis during prometaphase, metaphase and early anaphase, and re-appears during telophase and cytokinesis. Post-translationally, ubiquitinated by RNF183 during prolonged ER stress, leading to degradation by the proteosome. Widely expressed, with highest levels in the brain, thymus, bone marrow, and kidney. Bcl-X(L) and Bcl-X(delta-TM) expression is enhanced in B- and T-lymphocytes that have been activated.

It localises to the mitochondrion membrane. The protein localises to the nucleus membrane. The protein resides in the cytoplasm. It is found in the cytoskeleton. Its subcellular location is the microtubule organizing center. It localises to the centrosome. The protein localises to the mitochondrion inner membrane. The protein resides in the mitochondrion outer membrane. It is found in the mitochondrion matrix. Its subcellular location is the cytoplasmic vesicle. It localises to the secretory vesicle. The protein localises to the synaptic vesicle membrane. The protein resides in the cytosol. In terms of biological role, potent inhibitor of cell death. Inhibits activation of caspases. Appears to regulate cell death by blocking the voltage-dependent anion channel (VDAC) by binding to it and preventing the release of the caspase activator, CYC1, from the mitochondrial membrane. Also acts as a regulator of G2 checkpoint and progression to cytokinesis during mitosis. Functionally, isoform Bcl-X(L) also regulates presynaptic plasticity, including neurotransmitter release and recovery, number of axonal mitochondria as well as size and number of synaptic vesicle clusters. During synaptic stimulation, increases ATP availability from mitochondria through regulation of mitochondrial membrane ATP synthase F(1)F(0) activity and regulates endocytic vesicle retrieval in hippocampal neurons through association with DMN1L and stimulation of its GTPase activity in synaptic vesicles. May attenuate inflammation impairing NLRP1-inflammasome activation, hence CASP1 activation and IL1B release. Its function is as follows. Isoform Bcl-X(S) promotes apoptosis. The sequence is that of Bcl-2-like protein 1 (Bcl2l1) from Mus musculus (Mouse).